A 252-amino-acid polypeptide reads, in one-letter code: N-acetylglucosaminyl-phosphatidylinositol de-N-acetylase (252 aa).

Residues 2–22 (ELVGFLCVAVAVLTWGFLRVW) form a helical membrane-spanning segment. The Cytoplasmic segment spans residues 23–252 (NSAERMRSPE…YMRINSLRFL (230 aa)).

The protein belongs to the PIGL family.

Its subcellular location is the endoplasmic reticulum membrane. The enzyme catalyses a 6-(N-acetyl-alpha-D-glucosaminyl)-1-(1,2-diacyl-sn-glycero-3-phospho)-1D-myo-inositol + H2O = a 6-(alpha-D-glucosaminyl)-1-(1,2-diacyl-sn-glycero-3-phospho)-1D-myo-inositol + acetate. The protein operates within glycolipid biosynthesis; glycosylphosphatidylinositol-anchor biosynthesis. Catalyzes the second step of glycosylphosphatidylinositol (GPI) biosynthesis, which is the de-N-acetylation of N-acetylglucosaminyl-phosphatidylinositol. The protein is N-acetylglucosaminyl-phosphatidylinositol de-N-acetylase (Pigl) of Mus musculus (Mouse).